A 158-amino-acid chain; its full sequence is Deoxyuridine 5'-triphosphate nucleotidohydrolase (158 aa).

Residues 75-77, N88, 92-94, and K102 contribute to the substrate site; these read RSG and TVD.

Belongs to the dUTPase family. Requires Mg(2+) as cofactor.

It catalyses the reaction dUTP + H2O = dUMP + diphosphate + H(+). It functions in the pathway pyrimidine metabolism; dUMP biosynthesis; dUMP from dCTP (dUTP route): step 2/2. Its function is as follows. This enzyme is involved in nucleotide metabolism: it produces dUMP, the immediate precursor of thymidine nucleotides and it decreases the intracellular concentration of dUTP so that uracil cannot be incorporated into DNA. The polypeptide is Deoxyuridine 5'-triphosphate nucleotidohydrolase (Bifidobacterium longum (strain DJO10A)).